The sequence spans 172 residues: Shikimate kinase (172 aa).

14–19 (GAGKST) contacts ATP. Residue Ser18 participates in Mg(2+) binding. Substrate is bound by residues Asp36, Arg60, and Gly82. An ATP-binding site is contributed by Arg120. Arg140 contacts substrate. Gln157 lines the ATP pocket.

Belongs to the shikimate kinase family. As to quaternary structure, monomer. Requires Mg(2+) as cofactor.

Its subcellular location is the cytoplasm. It carries out the reaction shikimate + ATP = 3-phosphoshikimate + ADP + H(+). Its pathway is metabolic intermediate biosynthesis; chorismate biosynthesis; chorismate from D-erythrose 4-phosphate and phosphoenolpyruvate: step 5/7. Catalyzes the specific phosphorylation of the 3-hydroxyl group of shikimic acid using ATP as a cosubstrate. The protein is Shikimate kinase of Pseudoalteromonas translucida (strain TAC 125).